The chain runs to 468 residues: Kynureninase 2 (468 aa).

Residues Leu-134, Thr-135, Phe-162 to Asp-165, Asp-247, His-250, and Tyr-272 each bind pyridoxal 5'-phosphate. Lys-273 carries the N6-(pyridoxal phosphate)lysine modification. The pyridoxal 5'-phosphate site is built by Trp-312 and Asn-340.

Belongs to the kynureninase family. As to quaternary structure, homodimer. Pyridoxal 5'-phosphate serves as cofactor.

The protein localises to the cytoplasm. The catalysed reaction is L-kynurenine + H2O = anthranilate + L-alanine + H(+). The enzyme catalyses 3-hydroxy-L-kynurenine + H2O = 3-hydroxyanthranilate + L-alanine + H(+). It functions in the pathway amino-acid degradation; L-kynurenine degradation; L-alanine and anthranilate from L-kynurenine: step 1/1. It participates in cofactor biosynthesis; NAD(+) biosynthesis; quinolinate from L-kynurenine: step 2/3. Functionally, catalyzes the cleavage of L-kynurenine (L-Kyn) and L-3-hydroxykynurenine (L-3OHKyn) into anthranilic acid (AA) and 3-hydroxyanthranilic acid (3-OHAA), respectively. The sequence is that of Kynureninase 2 (bna5-2) from Aspergillus oryzae (strain ATCC 42149 / RIB 40) (Yellow koji mold).